The sequence spans 390 residues: Putative gustatory receptor 36c (390 aa).

At 1–4 the chain is on the cytoplasmic side; sequence MDLE. Residues 5–25 form a helical membrane-spanning segment; the sequence is SFLLGAVYYYGLFIGLSNFEF. Residues 26–36 are Extracellular-facing; the sequence is DWNTGRVFTKK. A helical membrane pass occupies residues 37–57; that stretch reads WSTLYAIALDSCIFALYIYHW. Topologically, residues 58–75 are cytoplasmic; that stretch reads TGNTNIVNAIFGRANMLH. A helical transmembrane segment spans residues 76–96; that stretch reads EYVVAILTGLRIVTGLFTLIL. Over 97–132 the chain is Extracellular; the sequence is RWYQRCKMMDLASKVVRMYVARPQVRRMSRWGILTK. A helical transmembrane segment spans residues 133–153; the sequence is FIFGSITDGLQMAMVLSAMGS. The Cytoplasmic portion of the chain corresponds to 154–165; it reads VDSQFYLGLGLQ. A helical membrane pass occupies residues 166-186; it reads YWMFVILNMAMMQQHMIMLFV. Residues 187–254 are Extracellular-facing; sequence RTQFQLINTE…MEEVFGIQGA (68 aa). A helical transmembrane segment spans residues 255–275; the sequence is MTYGGYYLSSVGTCYLAYSIL. Residues 276–288 lie on the Cytoplasmic side of the membrane; it reads KHGYENLSMTLST. Residues 289–309 traverse the membrane as a helical segment; it reads VILAYSWCFFYYLDGMLNLSV. Topologically, residues 310-390 are extracellular; that stretch reads MLHVQDDYWE…FLIQYDIEHF (81 aa).

Belongs to the insect chemoreceptor superfamily. Gustatory receptor (GR) family. Gr22e subfamily. Expressed in neurons of the terminal external chemosensory organ of larvae.

Its subcellular location is the cell membrane. Probable gustatory receptor which mediates acceptance or avoidance behavior, depending on its substrates. In Drosophila melanogaster (Fruit fly), this protein is Putative gustatory receptor 36c (Gr36c).